A 360-amino-acid polypeptide reads, in one-letter code: DNA replication and repair protein RecF (360 aa).

Position 30 to 37 (30 to 37 (GQNGSGKT)) interacts with ATP.

The protein belongs to the RecF family.

Its subcellular location is the cytoplasm. Its function is as follows. The RecF protein is involved in DNA metabolism; it is required for DNA replication and normal SOS inducibility. RecF binds preferentially to single-stranded, linear DNA. It also seems to bind ATP. The chain is DNA replication and repair protein RecF from Shewanella sp. (strain MR-7).